Here is a 466-residue protein sequence, read N- to C-terminus: Glycosyl hydrolase family 109 protein (466 aa).

Positions M1–A30 form a signal peptide, tat-type signal. Residues S59–R60, D81, W130–H133, E151–V152, and N180 contribute to the NAD(+) site. A substrate-binding site is contributed by Y209. Residue A241–W245 coordinates NAD(+). Residues R246, Y258–H261, and Y340 contribute to the substrate site. Y258 serves as a coordination point for NAD(+).

The protein belongs to the Gfo/Idh/MocA family. Glycosyl hydrolase 109 subfamily. The cofactor is NAD(+). In terms of processing, predicted to be exported by the Tat system. The position of the signal peptide cleavage has not been experimentally proven.

Functionally, glycosidase. The polypeptide is Glycosyl hydrolase family 109 protein (Parabacteroides distasonis (strain ATCC 8503 / DSM 20701 / CIP 104284 / JCM 5825 / NCTC 11152)).